Here is a 942-residue protein sequence, read N- to C-terminus: Inter-alpha-trypsin inhibitor heavy chain H5 (942 aa).

An N-terminal signal peptide occupies residues 1-16 (MLLLLGLCLGLSLCVG). The 127-residue stretch at 35 to 161 (VPRQVRLLQR…KAAFFLSYEE (127 aa)) folds into the VIT domain. Residues Asn-97 and Asn-127 are each glycosylated (N-linked (GlcNAc...) asparagine). Disordered regions lie at residues 116–136 (KKSG…NGEK) and 208–227 (SRQR…PSTV). Residues Asn-231, Asn-421, and Asn-508 are each glycosylated (N-linked (GlcNAc...) asparagine). The VWFA domain occupies 295-478 (NVVFVLDSSA…SQLIGFYDEI (184 aa)). The interval 550 to 571 (QKAGKDVTGSPRPGGDGEGDTN) is disordered. N-linked (GlcNAc...) asparagine glycans are attached at residues Asn-776, Asn-795, and Asn-862.

Belongs to the ITIH family. Abundantly expressed in placenta. Less abundant expression in mammary gland and ovary. Expression is barely detectable levels in all other tissues tested.

It is found in the secreted. May act as a tumor suppressor. The protein is Inter-alpha-trypsin inhibitor heavy chain H5 (ITIH5) of Homo sapiens (Human).